The following is a 1475-amino-acid chain: ABC transporter G family member 15 (1475 aa).

Over residues 1-10 (MDSNENKKNG) the composition is skewed to basic and acidic residues. Disordered regions lie at residues 1–40 (MDSN…EEHI) and 75–94 (NIKN…GGGA). Over residues 17 to 34 (NIINNNNDNNNNNDNNNN) the composition is skewed to low complexity. Positions 25–67 (NNNNNDNNNNSTEEHIESVEQSIKEFNNVANELETEFRDYLVE) form a coiled coil. The 250-residue stretch at 155–404 (LNVKNWFKKS…FIDMGFECEP (250 aa)) folds into the ABC transporter 1 domain. Positions 507–753 (WGDKFSLISR…FTGERYLEKS (247 aa)) constitute an ABC transmembrane type-2 1 domain. The next 5 helical transmembrane spans lie at 596-616 (IPII…MFGL), 623-641 (FFIN…NNLY), 653-673 (IGQN…SYII), 680-699 (VWFG…RALM), and 770-790 (ICIV…VLNI). The region spanning 842–1087 (FTWQHMYYSV…LTSYFQRHGV (246 aa)) is the ABC transporter 2 domain. Position 879-886 (879-886 (GSSGAGKT)) interacts with ATP. A run of 6 helical transmembrane segments spans residues 1180-1200 (GYSY…GWTF), 1216-1236 (FIFN…PQFI), 1256-1276 (FALS…TIFF), 1293-1313 (FFFW…GQAI), 1323-1343 (ALNL…VLVI), and 1449-1469 (FGII…FVFL). In terms of domain architecture, ABC transmembrane type-2 2 spans 1180 to 1404 (GYSYGTFIQS…TCSDYAFEFL (225 aa)).

It belongs to the ABC transporter superfamily. ABCG family. PDR (TC 3.A.1.205) subfamily.

The protein localises to the membrane. In Dictyostelium discoideum (Social amoeba), this protein is ABC transporter G family member 15 (abcG15).